The chain runs to 433 residues: tRNA modification GTPase MnmE (433 aa).

Positions 24, 86, and 125 each coordinate (6S)-5-formyl-5,6,7,8-tetrahydrofolate. Positions 218 to 363 (GARLALIGAP…LKEALREALL (146 aa)) constitute a TrmE-type G domain. N228 serves as a coordination point for K(+). GTP-binding positions include 228–233 (NAGKSS), 247–253 (SPIPGTT), and 272–275 (DTAG). A Mg(2+)-binding site is contributed by S232. K(+) contacts are provided by S247, I249, and T252. T253 is a binding site for Mg(2+). K433 serves as a coordination point for (6S)-5-formyl-5,6,7,8-tetrahydrofolate.

This sequence belongs to the TRAFAC class TrmE-Era-EngA-EngB-Septin-like GTPase superfamily. TrmE GTPase family. In terms of assembly, homodimer. Heterotetramer of two MnmE and two MnmG subunits. It depends on K(+) as a cofactor.

It is found in the cytoplasm. Exhibits a very high intrinsic GTPase hydrolysis rate. Involved in the addition of a carboxymethylaminomethyl (cmnm) group at the wobble position (U34) of certain tRNAs, forming tRNA-cmnm(5)s(2)U34. In Thermus thermophilus (strain ATCC BAA-163 / DSM 7039 / HB27), this protein is tRNA modification GTPase MnmE.